Here is a 131-residue protein sequence, read N- to C-terminus: Holo-[acyl-carrier-protein] synthase (131 aa).

Residues Asp8 and Glu59 each contribute to the Mg(2+) site.

It belongs to the P-Pant transferase superfamily. AcpS family. It depends on Mg(2+) as a cofactor.

Its subcellular location is the cytoplasm. It catalyses the reaction apo-[ACP] + CoA = holo-[ACP] + adenosine 3',5'-bisphosphate + H(+). Its function is as follows. Transfers the 4'-phosphopantetheine moiety from coenzyme A to a Ser of acyl-carrier-protein. The polypeptide is Holo-[acyl-carrier-protein] synthase (Paramagnetospirillum magneticum (strain ATCC 700264 / AMB-1) (Magnetospirillum magneticum)).